Reading from the N-terminus, the 668-residue chain is UvrABC system protein B (668 aa).

In terms of domain architecture, Helicase ATP-binding spans 27–413 (AGVQAGHRFQ…STQVVEQIIR (387 aa)). 40-47 (GATGTGKT) contacts ATP. The short motif at 93–116 (YYDYYQPEAYIPVTDTYIEKSASI) is the Beta-hairpin element. One can recognise a Helicase C-terminal domain in the interval 430 to 596 (QVDDLYGEIR…PIVKKTSNAI (167 aa)). Residues 628–663 (PPLIQDLEAKMKAAAQELAFEEAARYRDQIKRLRDR) form the UVR domain.

It belongs to the UvrB family. Forms a heterotetramer with UvrA during the search for lesions. Interacts with UvrC in an incision complex.

It is found in the cytoplasm. Its function is as follows. The UvrABC repair system catalyzes the recognition and processing of DNA lesions. A damage recognition complex composed of 2 UvrA and 2 UvrB subunits scans DNA for abnormalities. Upon binding of the UvrA(2)B(2) complex to a putative damaged site, the DNA wraps around one UvrB monomer. DNA wrap is dependent on ATP binding by UvrB and probably causes local melting of the DNA helix, facilitating insertion of UvrB beta-hairpin between the DNA strands. Then UvrB probes one DNA strand for the presence of a lesion. If a lesion is found the UvrA subunits dissociate and the UvrB-DNA preincision complex is formed. This complex is subsequently bound by UvrC and the second UvrB is released. If no lesion is found, the DNA wraps around the other UvrB subunit that will check the other stand for damage. The protein is UvrABC system protein B of Thermosynechococcus vestitus (strain NIES-2133 / IAM M-273 / BP-1).